The following is a 245-amino-acid chain: tRNA (guanine-N(1)-)-methyltransferase (245 aa).

S-adenosyl-L-methionine contacts are provided by residues G113 and 133–138; that span reads IGDYVL.

It belongs to the RNA methyltransferase TrmD family. As to quaternary structure, homodimer.

It is found in the cytoplasm. It carries out the reaction guanosine(37) in tRNA + S-adenosyl-L-methionine = N(1)-methylguanosine(37) in tRNA + S-adenosyl-L-homocysteine + H(+). Functionally, specifically methylates guanosine-37 in various tRNAs. The protein is tRNA (guanine-N(1)-)-methyltransferase of Anoxybacillus flavithermus (strain DSM 21510 / WK1).